Consider the following 118-residue polypeptide: Small ribosomal subunit protein uS13 (118 aa).

Residues 94 to 118 (GLPLRGQRTRTNARTRKGPRRPIRK) are disordered.

It belongs to the universal ribosomal protein uS13 family. Part of the 30S ribosomal subunit. Forms a loose heterodimer with protein S19. Forms two bridges to the 50S subunit in the 70S ribosome.

In terms of biological role, located at the top of the head of the 30S subunit, it contacts several helices of the 16S rRNA. In the 70S ribosome it contacts the 23S rRNA (bridge B1a) and protein L5 of the 50S subunit (bridge B1b), connecting the 2 subunits; these bridges are implicated in subunit movement. Contacts the tRNAs in the A and P-sites. The chain is Small ribosomal subunit protein uS13 from Thioalkalivibrio sulfidiphilus (strain HL-EbGR7).